Consider the following 370-residue polypeptide: Calcium-binding protein 1 (370 aa).

Residues 1 to 198 form a disordered region; the sequence is MGGGDGAAFK…GRGDSVPAAA (198 aa). Glycine 2 carries N-myristoyl glycine lipidation. The S-palmitoyl cysteine moiety is linked to residue glycine 4. 3 stretches are compositionally biased toward low complexity: residues 50-61, 68-84, and 148-157; these read HASAGPAAMSSH, KTSL…GGSR, and ALPAAASRPS. 4 consecutive EF-hand domains span residues 225–260, 279–296, 302–337, and 339–370; these read EEIE…MGYM, GHVD…KLLA, IGVK…LLGH, and VGHR…MMSR. Residues aspartate 238, aspartate 240, aspartate 242, tyrosine 244, and aspartate 249 each contribute to the Ca(2+) site. Aspartate 238, aspartate 240, aspartate 242, and tyrosine 244 together coordinate Mg(2+). Residues aspartate 315, asparagine 317, aspartate 319, and glutamate 321 each contribute to the Ca(2+) site. At serine 323 the chain carries Phosphoserine. Glutamate 326, aspartate 352, leucine 353, asparagine 354, aspartate 356, glycine 357, arginine 358, aspartate 360, and glutamate 363 together coordinate Ca(2+).

In terms of assembly, homodimer; when bound to calcium or magnesium. Interacts (via C-terminus) with ITPR1, ITPR2 and ITPR3. This binding is calcium dependent and the interaction correlates with calcium concentration. An additional calcium-independent interaction with the N-terminus of ITPR1 results in a decreased InsP(3) binding to the receptor. Interacts with CACNA1A (via C-terminal CDB motif) in the pre- and postsynaptic membranes. Interacts with CACNA1C (via C-terminal C and IQ motifs). The binding to the C motif is calcium independent whereas the binding to IQ requires the presence of calcium and is mutually exclusive with calmodulin binding. Interacts with CACNA1D. Interacts with TRPC5 (via C-terminus). Interacts (via EF-hands 1 and 2) at microtubules with MAP1LC3B. Interacts with MYO1C. Interacts (via EF-hands 1 and 2) with NSMF (via the central NLS-containing motif region), the interaction occurs in a calcium dependent manner after synaptic NMDA receptor stimulation and prevents nuclear import of NSMF. Interacts with SPACA9. Phosphorylated. The phosphorylation regulates the activity. As to expression, retina and brain. Somatodendritic compartment of neurons. Calbrain was found exclusively in brain where it is abundant in the hippocampus, habenular area in the epithalamus and in the cerebellum.

The protein localises to the cytoplasm. It localises to the cytoskeleton. The protein resides in the perinuclear region. It is found in the cell membrane. Its subcellular location is the golgi apparatus. The protein localises to the postsynaptic density. It localises to the cell cortex. Modulates calcium-dependent activity of inositol 1,4,5-triphosphate receptors (ITPRs). Inhibits agonist-induced intracellular calcium signaling. Enhances inactivation and does not support calcium-dependent facilitation of voltage-dependent P/Q-type calcium channels. Causes calcium-dependent facilitation and inhibits inactivation of L-type calcium channels by binding to the same sites as calmodulin in the C-terminal domain of CACNA1C, but has an opposite effect on channel function. Suppresses the calcium-dependent inactivation of CACNA1D. Inhibits TRPC5 channels. Prevents NMDA receptor-induced cellular degeneration. Required for the normal transfer of light signals through the retina. The chain is Calcium-binding protein 1 (CABP1) from Homo sapiens (Human).